Reading from the N-terminus, the 522-residue chain is GMP synthase [glutamine-hydrolyzing] (522 aa).

The 196-residue stretch at 9-204 folds into the Glutamine amidotransferase type-1 domain; sequence KILILDFGAQ…VVDICGCQTL (196 aa). The active-site Nucleophile is Cys-86. Residues His-178 and Glu-180 contribute to the active site. Residues 205-397 enclose the GMPS ATP-PPase domain; that stretch reads WTAANIIEDQ…LGLPHAMVYR (193 aa). Residue 232-238 coordinates ATP; it reads SGGVDSS.

Homodimer.

It catalyses the reaction XMP + L-glutamine + ATP + H2O = GMP + L-glutamate + AMP + diphosphate + 2 H(+). It participates in purine metabolism; GMP biosynthesis; GMP from XMP (L-Gln route): step 1/1. Functionally, catalyzes the synthesis of GMP from XMP. The chain is GMP synthase [glutamine-hydrolyzing] from Xylella fastidiosa (strain M12).